We begin with the raw amino-acid sequence, 744 residues long: TonB-dependent heme receptor A (744 aa).

Positions 1-24 (MNILINKRIFLLVTLVGIQLNVTA) are cleaved as a signal peptide. The TBDR plug domain occupies 45-157 (DDSNKLPGRS…FAGTVKFETK (113 aa)). In terms of domain architecture, TBDR beta-barrel spans 168-744 (KIGGFLKYGN…NIKFSLSQKF (577 aa)).

The protein belongs to the TonB-dependent receptor family.

It is found in the cell outer membrane. Heme receptor. In Haemophilus influenzae (strain ATCC 51907 / DSM 11121 / KW20 / Rd), this protein is TonB-dependent heme receptor A (tdhA).